The chain runs to 332 residues: Biotin synthase (332 aa).

The 227-residue stretch at 47 to 273 folds into the Radical SAM core domain; it reads YYGNKVKLNM…MNPTKEIRIA (227 aa). [4Fe-4S] cluster-binding residues include C65, C69, and C72. Residues C109, C141, C201, and R271 each coordinate [2Fe-2S] cluster.

Belongs to the radical SAM superfamily. Biotin synthase family. As to quaternary structure, homodimer. The cofactor is [4Fe-4S] cluster. It depends on [2Fe-2S] cluster as a cofactor.

It catalyses the reaction (4R,5S)-dethiobiotin + (sulfur carrier)-SH + 2 reduced [2Fe-2S]-[ferredoxin] + 2 S-adenosyl-L-methionine = (sulfur carrier)-H + biotin + 2 5'-deoxyadenosine + 2 L-methionine + 2 oxidized [2Fe-2S]-[ferredoxin]. It participates in cofactor biosynthesis; biotin biosynthesis; biotin from 7,8-diaminononanoate: step 2/2. Functionally, catalyzes the conversion of dethiobiotin (DTB) to biotin by the insertion of a sulfur atom into dethiobiotin via a radical-based mechanism. This is Biotin synthase from Geobacillus thermodenitrificans (strain NG80-2).